The following is a 72-amino-acid chain: Translation initiation factor IF-1 (72 aa).

Positions 1 to 72 (MSKEDMIEFS…TKGRITFRFK (72 aa)) constitute an S1-like domain.

It belongs to the IF-1 family. In terms of assembly, component of the 30S ribosomal translation pre-initiation complex which assembles on the 30S ribosome in the order IF-2 and IF-3, IF-1 and N-formylmethionyl-tRNA(fMet); mRNA recruitment can occur at any time during PIC assembly.

The protein resides in the cytoplasm. One of the essential components for the initiation of protein synthesis. Stabilizes the binding of IF-2 and IF-3 on the 30S subunit to which N-formylmethionyl-tRNA(fMet) subsequently binds. Helps modulate mRNA selection, yielding the 30S pre-initiation complex (PIC). Upon addition of the 50S ribosomal subunit IF-1, IF-2 and IF-3 are released leaving the mature 70S translation initiation complex. This Granulibacter bethesdensis (strain ATCC BAA-1260 / CGDNIH1) protein is Translation initiation factor IF-1.